Here is a 313-residue protein sequence, read N- to C-terminus: Formate-nitrite transporter (313 aa).

The Cytoplasmic segment spans residues 1–46 (MTKGSKYTIDPISVKTACTSEESYIRCVEYGKGKAHYPNLSLLAKA). Residues 47 to 67 (ILAGVFVGVCAHASGIAGGHF) traverse the membrane as a helical segment. The Extracellular portion of the chain corresponds to 68 to 77 (YYHKLREHVG). The chain crosses the membrane as a helical span at residues 78 to 98 (ISMSAFVYGFTFPIAFLCIIA). Residues 99–127 (TGSDLFTGNTLAVTTALLQRKVTLLEYLR) lie on the Cytoplasmic side of the membrane. A helical transmembrane segment spans residues 128-148 (VMSISLFGNYVGAVSFAFFVS). Residues 149–184 (HLSGAFKKHEEIGKNHIFQFLNDIAEKKVSHTFVQC) lie on the Extracellular side of the membrane. The helical transmembrane segment at 185–205 (VCLAIGCNIFVCLAVYFVLTI) threads the bilayer. Over 206 to 210 (KDGSG) the chain is Cytoplasmic. A helical membrane pass occupies residues 211–231 (MVFSVFFAVYAFAIAGYEHII). Topologically, residues 232-256 (ANMYTLNLALMIEANVDWTKVYVDN) are extracellular. Residues 257 to 277 (LLPTLIGNYIAGAIVLACPLF) traverse the membrane as a helical segment. The Cytoplasmic segment spans residues 278-313 (YIYRHSYSDYEKTRGDGGNSGLKSLSIEMQNGSSGR). The disordered stretch occupies residues 290-313 (TRGDGGNSGLKSLSIEMQNGSSGR). Residues 298–313 (GLKSLSIEMQNGSSGR) are compositionally biased toward polar residues.

Belongs to the FNT transporter (TC 1.A.16) family. Homopentamer.

The protein localises to the cell membrane. It localises to the vacuole membrane. It catalyses the reaction (S)-lactate(in) + H(+)(in) = (S)-lactate(out) + H(+)(out). It carries out the reaction formate(in) + H(+)(in) = formate(out) + H(+)(out). The catalysed reaction is pyruvate(out) + H(+)(out) = pyruvate(in) + H(+)(in). The enzyme catalyses acetate(out) + H(+)(out) = acetate(in) + H(+)(in). Its activity is regulated as follows. Inhibited by the Malaria Box compound MMV007839 and its derivatives BH296 and BH267.meta. In terms of biological role, monocarboxylate-proton symporter that mediates the efflux of the waste product lactate in the intraerythrocytic parasites; active in acidic-to-neutral pH range. Transports L-lactate. The chain is Formate-nitrite transporter from Plasmodium vivax.